We begin with the raw amino-acid sequence, 62 residues long: uncharacterized protein (62 aa).

A coiled-coil region spans residues 28–61 (KIESTHPEIAKKLKEAAEKYREVEEILKKAVDMV).

This is an uncharacterized protein from Archaeoglobus fulgidus (strain ATCC 49558 / DSM 4304 / JCM 9628 / NBRC 100126 / VC-16).